The primary structure comprises 221 residues: Ribosomal RNA small subunit methyltransferase G (221 aa).

G78, F83, and R150 together coordinate S-adenosyl-L-methionine.

Belongs to the methyltransferase superfamily. RNA methyltransferase RsmG family.

The protein localises to the cytoplasm. In terms of biological role, specifically methylates the N7 position of a guanine in 16S rRNA. This chain is Ribosomal RNA small subunit methyltransferase G, found in Bifidobacterium longum (strain DJO10A).